The sequence spans 272 residues: Proteasome subunit beta type-5 (272 aa).

Residues 1–55 constitute a propeptide, removed in mature form; it reads MKLDTSGLESTAPIFRRSDFVFDGLQMTPSFDLPNPTDFDGFQKEAVQMVKPAKG. Thr56 functions as the Nucleophile in the catalytic mechanism.

It belongs to the peptidase T1B family. In terms of assembly, the 26S proteasome consists of a 20S proteasome core and two 19S regulatory subunits. The 20S proteasome core is composed of 28 subunits that are arranged in four stacked rings, resulting in a barrel-shaped structure. The two end rings are each formed by seven alpha subunits, and the two central rings are each formed by seven beta subunits. The catalytic chamber with the active sites is on the inside of the barrel.

It is found in the cytoplasm. It localises to the nucleus. The enzyme catalyses Cleavage of peptide bonds with very broad specificity.. Functionally, the proteasome is a multicatalytic proteinase complex which is characterized by its ability to cleave peptides with Arg, Phe, Tyr, Leu, and Glu adjacent to the leaving group at neutral or slightly basic pH. The proteasome has an ATP-dependent proteolytic activity. This Spinacia oleracea (Spinach) protein is Proteasome subunit beta type-5.